The primary structure comprises 116 residues: Small ribosomal subunit protein uS13m (116 aa).

It belongs to the universal ribosomal protein uS13 family. In terms of assembly, part of the small ribosomal subunit.

The protein resides in the mitochondrion. Its function is as follows. Located at the top of the head of the small subunit, it contacts several helices of the 18S rRNA. The polypeptide is Small ribosomal subunit protein uS13m (RPS13) (Nicotiana tabacum (Common tobacco)).